A 113-amino-acid chain; its full sequence is Hydrogenase maturation factor HypA 1 (113 aa).

Residue His-2 participates in Ni(2+) binding. Residues Cys-73, Cys-76, Cys-89, and Cys-92 each contribute to the Zn(2+) site.

The protein belongs to the HypA/HybF family.

Its function is as follows. Involved in the maturation of [NiFe] hydrogenases. Required for nickel insertion into the metal center of the hydrogenase. In Bradyrhizobium diazoefficiens (strain JCM 10833 / BCRC 13528 / IAM 13628 / NBRC 14792 / USDA 110), this protein is Hydrogenase maturation factor HypA 1.